Consider the following 550-residue polypeptide: Methionine--tRNA ligase (550 aa).

The 'HIGH' region signature appears at 13 to 23; sequence PYANGPLHFGH. Zn(2+) contacts are provided by cysteine 145, cysteine 148, cysteine 158, and cysteine 161. A 'KMSKS' region motif is present at residues 331 to 335; sequence QFSKS. Residue lysine 334 coordinates ATP.

It belongs to the class-I aminoacyl-tRNA synthetase family. MetG type 1 subfamily. Monomer. The cofactor is Zn(2+).

It localises to the cytoplasm. The enzyme catalyses tRNA(Met) + L-methionine + ATP = L-methionyl-tRNA(Met) + AMP + diphosphate. Its function is as follows. Is required not only for elongation of protein synthesis but also for the initiation of all mRNA translation through initiator tRNA(fMet) aminoacylation. This chain is Methionine--tRNA ligase, found in Chlamydia trachomatis serovar L2b (strain UCH-1/proctitis).